The primary structure comprises 144 residues: Transcriptional regulator SlyA (144 aa).

Residues 2-135 (ESPLGSDLAR…LIKLIAKLEH (134 aa)) enclose the HTH marR-type domain. The segment at residues 49 to 72 (QIQLAKAIGIEQPSLVRTLDQLEE) is a DNA-binding region (H-T-H motif).

This sequence belongs to the SlyA family. As to quaternary structure, homodimer.

Its function is as follows. Transcription regulator that can specifically activate or repress expression of target genes. This is Transcriptional regulator SlyA from Escherichia coli O127:H6 (strain E2348/69 / EPEC).